The primary structure comprises 113 residues: Large ribosomal subunit protein uL22 (113 aa).

The protein belongs to the universal ribosomal protein uL22 family. Part of the 50S ribosomal subunit.

Functionally, this protein binds specifically to 23S rRNA; its binding is stimulated by other ribosomal proteins, e.g. L4, L17, and L20. It is important during the early stages of 50S assembly. It makes multiple contacts with different domains of the 23S rRNA in the assembled 50S subunit and ribosome. In terms of biological role, the globular domain of the protein is located near the polypeptide exit tunnel on the outside of the subunit, while an extended beta-hairpin is found that lines the wall of the exit tunnel in the center of the 70S ribosome. This Stenotrophomonas maltophilia (strain K279a) protein is Large ribosomal subunit protein uL22.